A 227-amino-acid polypeptide reads, in one-letter code: 2-C-methyl-D-erythritol 4-phosphate cytidylyltransferase (227 aa).

It belongs to the IspD/TarI cytidylyltransferase family. IspD subfamily.

The catalysed reaction is 2-C-methyl-D-erythritol 4-phosphate + CTP + H(+) = 4-CDP-2-C-methyl-D-erythritol + diphosphate. It functions in the pathway isoprenoid biosynthesis; isopentenyl diphosphate biosynthesis via DXP pathway; isopentenyl diphosphate from 1-deoxy-D-xylulose 5-phosphate: step 2/6. In terms of biological role, catalyzes the formation of 4-diphosphocytidyl-2-C-methyl-D-erythritol from CTP and 2-C-methyl-D-erythritol 4-phosphate (MEP). The polypeptide is 2-C-methyl-D-erythritol 4-phosphate cytidylyltransferase (Bordetella parapertussis (strain 12822 / ATCC BAA-587 / NCTC 13253)).